The following is a 443-amino-acid chain: MVNEYDTYNKWLKFFSVRMVQSIIQSRLGDEIESKCVPYSENAVDWFNMRIDELGEISAYLKSNIKSYPPVGTLTLEFLLYTPSGQLLPLEAWILSSSEGTDDCSRNELYHDMSTLLRSAIVSARMTPMHRLYVKKQHLETFVIMYRVFENDISSDMGKGKKTRKIGELVSKFGNISLDLHYRTSMHFEEPEIAPVTPVEDVEEEIDDGEKTVVDENIQTRTVSECVPIADAKKRKASGSVESATSAGSSTSREAAPRFILGQSTSSEDSRHSDVQNSYEEDHKPSLADLRNHSFPFVNLLQSAYNPANGTKKNSSSTCLNSPKSTPEDKEPTIEKVAESFRAAKIDEVVFEEDEDEELPLDSMELSEDSFVHFNQLSDFGGAPSLGNELGDYLKQLKTAPDMTESGDIDICNMDLKTELEKISSQTANFNNFLKHVNSFSDE.

Disordered regions lie at residues 232-283 (AKKR…EEDH) and 308-333 (ANGT…KEPT). Residues 240-253 (SVESATSAGSSTSR) are compositionally biased toward polar residues. Residues 268-283 (EDSRHSDVQNSYEEDH) show a composition bias toward basic and acidic residues. Over residues 308 to 325 (ANGTKKNSSSTCLNSPKS) the composition is skewed to polar residues.

It belongs to the ATG13 family. Metazoan subfamily. As to quaternary structure, interacts with unc-51 (via C-terminus). Interacts with lgg-1; the interaction is direct.

It localises to the cytoplasm. Its subcellular location is the cytosol. The protein localises to the preautophagosomal structure. It is found in the perikaryon. The protein resides in the cell projection. It localises to the axon. Component of the unc-51/atg-13 complex required for autophagosome formation. Required for the degradation of germ cell specific P-granule components such as sepa-1 by autophagy in somatic cells. This ensures exclusive localization of the P-granules in germ cells. May function downstream of the let-363 (Tor) signaling pathway to mediate sepa-1 degradation. Plays a role in survival during limited food availability. This is Autophagy-related protein 13 homolog from Caenorhabditis elegans.